The following is a 200-amino-acid chain: Vacuolar iron transporter homolog 3 (200 aa).

At M1 to A31 the chain is on the cytoplasmic side. Residues V32–V52 traverse the membrane as a helical segment. Residues K53 to M59 lie on the Vacuolar side of the membrane. Residues I60–V80 traverse the membrane as a helical segment. The Cytoplasmic segment spans residues S81–A113. Residues A114–V134 form a helical membrane-spanning segment. Residues K135–R140 lie on the Vacuolar side of the membrane. Residues I141–V161 traverse the membrane as a helical segment. The Cytoplasmic segment spans residues L162–R173. A helical membrane pass occupies residues V174–S194. Over H195–V200 the chain is Vacuolar.

Belongs to the CCC1 family.

The protein resides in the vacuole membrane. The catalysed reaction is Fe(2+)(in) = Fe(2+)(out). In terms of biological role, probable vacuolar iron transporter that may be involved in the regulation of iron distribution throughout the plant. This chain is Vacuolar iron transporter homolog 3, found in Arabidopsis thaliana (Mouse-ear cress).